A 283-amino-acid chain; its full sequence is MSIKKRKPTINSQRQYSVDDKEDITTTDPERSLLEPLPNSGGRNNQGRMTMRYRGGGHKRRYRKIDFKRRDKDGIPATVKTIEYDPNRSARISLLAYADGEKRYIITPDGLEVGDTVMNGPQAQAEVGNCLPLTSIPLGTKVHCVEMTPEKGAQMVRAAGTHAQLTAREGDYATLELPSGETRLVPSKCRATVGTTSNVEHENVVLGKAGRKRWLGRRPRTRGVAMNPIDHPMGGGEGLKSGGHPRSREGVPAKGYKTRKRNKESNKYIIRRRTESKQGTGGQ.

Disordered regions lie at residues 1–59 (MSIK…GGHK) and 222–283 (RGVA…TGGQ).

This sequence belongs to the universal ribosomal protein uL2 family. Part of the 50S ribosomal subunit. Forms a bridge to the 30S subunit in the 70S ribosome.

Its function is as follows. One of the primary rRNA binding proteins. Required for association of the 30S and 50S subunits to form the 70S ribosome, for tRNA binding and peptide bond formation. It has been suggested to have peptidyltransferase activity; this is somewhat controversial. Makes several contacts with the 16S rRNA in the 70S ribosome. The sequence is that of Large ribosomal subunit protein uL2 from Salinibacter ruber (strain DSM 13855 / M31).